A 118-amino-acid chain; its full sequence is MLGAYLPIIVLVVVAVLFGCGSLIFSSLIGQKKPSVVKMAPYECGCEPVGSARERFSIKFYIIAMLFILFDIEAVFLYPWAVLFKRLGMFGLMEMGVFIVILFVGYIYVWKKGALEWE.

A run of 3 helical transmembrane segments spans residues 5–25 (YLPI…SLIF), 62–82 (IIAM…PWAV), and 87–107 (LGMF…VGYI).

The protein belongs to the complex I subunit 3 family. In terms of assembly, NDH-1 is composed of 14 different subunits. Subunits NuoA, H, J, K, L, M, N constitute the membrane sector of the complex.

Its subcellular location is the cell inner membrane. It carries out the reaction a quinone + NADH + 5 H(+)(in) = a quinol + NAD(+) + 4 H(+)(out). Its function is as follows. NDH-1 shuttles electrons from NADH, via FMN and iron-sulfur (Fe-S) centers, to quinones in the respiratory chain. The immediate electron acceptor for the enzyme in this species is believed to be ubiquinone. Couples the redox reaction to proton translocation (for every two electrons transferred, four hydrogen ions are translocated across the cytoplasmic membrane), and thus conserves the redox energy in a proton gradient. This chain is NADH-quinone oxidoreductase subunit A 2, found in Geotalea uraniireducens (strain Rf4) (Geobacter uraniireducens).